The following is a 67-amino-acid chain: Conotoxin Lt5.9 (67 aa).

The N-terminal stretch at 1–19 (MLCLPVFIILLLLASPAAP) is a signal peptide. The propeptide occupies 20 to 46 (KSFETKVQSDLTRTDGNMETEENLGEV).

Belongs to the conotoxin T superfamily. Post-translationally, contains 2 disulfide bonds that can be either 'C1-C3, C2-C4' or 'C1-C4, C2-C3', since these disulfide connectivities have been observed for conotoxins with cysteine framework V (for examples, see AC P0DQQ7 and AC P81755). In terms of tissue distribution, expressed by the venom duct.

The protein localises to the secreted. The protein is Conotoxin Lt5.9 of Conus litteratus (Lettered cone).